The chain runs to 235 residues: Glycerol-3-phosphate acyltransferase (235 aa).

A run of 6 helical transmembrane segments spans residues 4–24, 56–76, 94–114, 125–145, 152–172, and 191–211; these read LLAILAVSYIIGSIPTSIMAG, SVTLIDIAKGVIAAVSVVAFF, LLAGMAAVIGHVFTVFAGFKG, LIGIAPVSMLIVIGIFLLTVW, VASILAAIAFPLIIAIRKYVF, and FHDSLDYHLMIFGLIVALAIL.

This sequence belongs to the PlsY family. In terms of assembly, probably interacts with PlsX.

Its subcellular location is the cell inner membrane. It catalyses the reaction an acyl phosphate + sn-glycerol 3-phosphate = a 1-acyl-sn-glycero-3-phosphate + phosphate. It participates in lipid metabolism; phospholipid metabolism. Functionally, catalyzes the transfer of an acyl group from acyl-phosphate (acyl-PO(4)) to glycerol-3-phosphate (G3P) to form lysophosphatidic acid (LPA). This enzyme utilizes acyl-phosphate as fatty acyl donor, but not acyl-CoA or acyl-ACP. The protein is Glycerol-3-phosphate acyltransferase of Chlorobium luteolum (strain DSM 273 / BCRC 81028 / 2530) (Pelodictyon luteolum).